Reading from the N-terminus, the 379-residue chain is Cytochrome b (379 aa).

The next 4 membrane-spanning stretches (helical) occupy residues 33 to 53 (FGSL…FLAM), 77 to 98 (WLIR…FIHV), 113 to 133 (WNIG…GYVL), and 178 to 198 (FFAF…VHLL). Heme b-binding residues include His83 and His97. Heme b is bound by residues His182 and His196. Residue His201 coordinates a ubiquinone. The next 4 membrane-spanning stretches (helical) occupy residues 226–246 (TKDL…TLFF), 288–308 (LGGV…PLLN), 320–340 (ITQT…WIGG), and 347–367 (FTTI…ILIP).

This sequence belongs to the cytochrome b family. As to quaternary structure, the cytochrome bc1 complex contains 11 subunits: 3 respiratory subunits (MT-CYB, CYC1 and UQCRFS1), 2 core proteins (UQCRC1 and UQCRC2) and 6 low-molecular weight proteins (UQCRH/QCR6, UQCRB/QCR7, UQCRQ/QCR8, UQCR10/QCR9, UQCR11/QCR10 and a cleavage product of UQCRFS1). This cytochrome bc1 complex then forms a dimer. The cofactor is heme b.

The protein resides in the mitochondrion inner membrane. Functionally, component of the ubiquinol-cytochrome c reductase complex (complex III or cytochrome b-c1 complex) that is part of the mitochondrial respiratory chain. The b-c1 complex mediates electron transfer from ubiquinol to cytochrome c. Contributes to the generation of a proton gradient across the mitochondrial membrane that is then used for ATP synthesis. The sequence is that of Cytochrome b (MT-CYB) from Akodon azarae (Azara's grass mouse).